The primary structure comprises 356 residues: Tyrosine recombinase XerS (356 aa).

In terms of domain architecture, Core-binding (CB) spans 16–121; the sequence is VMPPYVLEYY…ALSSLYKYLT (106 aa). In terms of domain architecture, Tyr recombinase spans 169 to 354; that stretch reads GFLDYIDSEY…INEEQKNALD (186 aa). Active-site residues include Arg210, Lys234, His306, Arg309, and His332. The active-site O-(3'-phospho-DNA)-tyrosine intermediate is the Tyr341.

Belongs to the 'phage' integrase family. XerS subfamily.

The protein localises to the cytoplasm. With respect to regulation, ftsK is required for recombination. Its function is as follows. Site-specific tyrosine recombinase, which acts by catalyzing the cutting and rejoining of the recombining DNA molecules. Essential to convert dimers of the bacterial chromosome into monomers to permit their segregation at cell division. Binds an atypical recombination dif site (difSL). Binds preferentially to the left arm and cooperatively to the right arm of difSL. The chain is Tyrosine recombinase XerS from Lactococcus lactis subsp. cremoris (strain MG1363).